Here is a 246-residue protein sequence, read N- to C-terminus: 4-hydroxy-tetrahydrodipicolinate reductase (246 aa).

Position 7-12 (Gly-7–Met-12) interacts with NAD(+). Arg-34 contributes to the NADP(+) binding site. NAD(+) is bound by residues Ala-76–Thr-78 and Cys-102–Thr-105. The active-site Proton donor/acceptor is His-135. Position 136 (His-136) interacts with (S)-2,3,4,5-tetrahydrodipicolinate. Lys-139 acts as the Proton donor in catalysis. Gly-145–Thr-146 serves as a coordination point for (S)-2,3,4,5-tetrahydrodipicolinate.

It belongs to the DapB family.

It is found in the cytoplasm. It catalyses the reaction (S)-2,3,4,5-tetrahydrodipicolinate + NAD(+) + H2O = (2S,4S)-4-hydroxy-2,3,4,5-tetrahydrodipicolinate + NADH + H(+). It carries out the reaction (S)-2,3,4,5-tetrahydrodipicolinate + NADP(+) + H2O = (2S,4S)-4-hydroxy-2,3,4,5-tetrahydrodipicolinate + NADPH + H(+). It participates in amino-acid biosynthesis; L-lysine biosynthesis via DAP pathway; (S)-tetrahydrodipicolinate from L-aspartate: step 4/4. Functionally, catalyzes the conversion of 4-hydroxy-tetrahydrodipicolinate (HTPA) to tetrahydrodipicolinate. The polypeptide is 4-hydroxy-tetrahydrodipicolinate reductase (Chlamydia abortus (strain DSM 27085 / S26/3) (Chlamydophila abortus)).